We begin with the raw amino-acid sequence, 242 residues long: Probable transcriptional regulatory protein Bcen2424_2294 (242 aa).

It belongs to the TACO1 family.

The protein resides in the cytoplasm. This Burkholderia cenocepacia (strain HI2424) protein is Probable transcriptional regulatory protein Bcen2424_2294.